A 260-amino-acid chain; its full sequence is Snake venom serine protease homolog KN7 (260 aa).

The first 18 residues, 1-18 (MVLIRVLANLLILQLSYA), serve as a signal peptide directing secretion. The propeptide occupies 19-24 (QKSSEL). A Peptidase S1 domain is found at 25–251 (IIGGDECNIN…HLDWIKSIIA (227 aa)). Disulfide bonds link Cys31-Cys165, Cys52-Cys68, Cys100-Cys258, Cys144-Cys212, Cys176-Cys191, and Cys202-Cys227. Residues Asn83, Asn123, and Asn124 are each glycosylated (N-linked (GlcNAc...) asparagine).

The protein belongs to the peptidase S1 family. Snake venom subfamily. In terms of tissue distribution, expressed by the venom gland.

The protein localises to the secreted. Functionally, snake venom serine protease homolog that may act in the hemostasis system of the prey. The protein is Snake venom serine protease homolog KN7 of Trimeresurus stejnegeri (Chinese green tree viper).